We begin with the raw amino-acid sequence, 308 residues long: Phosphoribosylaminoimidazole-succinocarboxamide synthase (308 aa).

It belongs to the SAICAR synthetase family.

It carries out the reaction 5-amino-1-(5-phospho-D-ribosyl)imidazole-4-carboxylate + L-aspartate + ATP = (2S)-2-[5-amino-1-(5-phospho-beta-D-ribosyl)imidazole-4-carboxamido]succinate + ADP + phosphate + 2 H(+). Its pathway is purine metabolism; IMP biosynthesis via de novo pathway; 5-amino-1-(5-phospho-D-ribosyl)imidazole-4-carboxamide from 5-amino-1-(5-phospho-D-ribosyl)imidazole-4-carboxylate: step 1/2. This chain is Phosphoribosylaminoimidazole-succinocarboxamide synthase, found in Xylella fastidiosa (strain Temecula1 / ATCC 700964).